Reading from the N-terminus, the 1755-residue chain is Transposon Ty1-OL Gag-Pol polyprotein (1755 aa).

Polar residues-rich tracts occupy residues 1 to 23 (MESQQLSNYPQISHGSACASVTS), 48 to 60 (TKANSQQTTTPAS), and 127 to 152 (QSQFPQYPSSVGTPLSTPSPESGNTF). 3 disordered regions span residues 1-93 (MESQ…MMTQ), 126-173 (PQSQ…RPPP), and 352-421 (GSRN…SKST). A compositionally biased stretch (low complexity) spans 153–165 (TDSSSADSDMTST). The RNA-binding stretch occupies residues 299-401 (NNGIHINNKV…NSKSKTARAH (103 aa)). A compositionally biased stretch (low complexity) spans 402–418 (NVSTSNNSPSTDNDSIS). Serine 416 is modified (phosphoserine). Aspartate 461 functions as the For protease activity; shared with dimeric partner in the catalytic mechanism. The tract at residues 583–640 (NVHTSESTRKYPYPFIHRMLAHANAQTIRYSLKNNTITYFNESDVDWSSAIDYQCPDC) is integrase-type zinc finger-like. An Integrase catalytic domain is found at 660-835 (NSYEPFQYLH…AGLDISTLLP (176 aa)). 2 residues coordinate Mg(2+): aspartate 671 and aspartate 736. Disordered regions lie at residues 956–1087 (SKAV…ETEK), 1092–1111 (RSPSIDASPPENNSSHNIVP), and 1130–1171 (DLPL…DSNA). A compositionally biased stretch (low complexity) spans 960 to 969 (SPTDSTPPST). Over residues 1005 to 1015 (STPQISNIEST) the composition is skewed to polar residues. Positions 1038-1053 (ESSHASKSKDFRHSDS) are enriched in basic and acidic residues. 2 stretches are compositionally biased toward polar residues: residues 1054–1082 (YSENETNHTNVPISSTGGTNNKTVPQISD) and 1101–1111 (PENNSSHNIVP). Residues 1178–1212 (KKRSLEDNETEIKVSRDTWNTKNMRSLEPPRSKKR) carry the Bipartite nuclear localization signal motif. The region spanning 1338–1476 (NNYYITQLDI…DILGLEIKYQ (139 aa)) is the Reverse transcriptase Ty1/copia-type domain. Positions 1346, 1427, 1428, 1610, 1652, and 1685 each coordinate Mg(2+). Residues 1610-1752 (DASYGNQPYY…IKTFKLLTNK (143 aa)) form the RNase H Ty1/copia-type domain.

The capsid protein forms a homotrimer, from which the VLPs are assembled. The protease is a homodimer, whose active site consists of two apposed aspartic acid residues. Post-translationally, initially, virus-like particles (VLPs) are composed of the structural unprocessed proteins Gag and Gag-Pol, and also contain the host initiator methionine tRNA (tRNA(i)-Met) which serves as a primer for minus-strand DNA synthesis, and a dimer of genomic Ty RNA. Processing of the polyproteins occurs within the particle and proceeds by an ordered pathway, called maturation. First, the protease (PR) is released by autocatalytic cleavage of the Gag-Pol polyprotein yielding capsid protein p45 and a Pol-p154 precursor protein. This cleavage is a prerequisite for subsequent processing of Pol-p154 at the remaining sites to release the mature structural and catalytic proteins. Maturation takes place prior to the RT reaction and is required to produce transposition-competent VLPs.

The protein resides in the cytoplasm. It is found in the nucleus. The catalysed reaction is DNA(n) + a 2'-deoxyribonucleoside 5'-triphosphate = DNA(n+1) + diphosphate. It carries out the reaction Endonucleolytic cleavage to 5'-phosphomonoester.. In terms of biological role, capsid protein (CA) is the structural component of the virus-like particle (VLP), forming the shell that encapsulates the retrotransposons dimeric RNA genome. The particles are assembled from trimer-clustered units and there are holes in the capsid shells that allow for the diffusion of macromolecules. CA also has nucleocapsid-like chaperone activity, promoting primer tRNA(i)-Met annealing to the multipartite primer-binding site (PBS), dimerization of Ty1 RNA and initiation of reverse transcription. The aspartyl protease (PR) mediates the proteolytic cleavages of the Gag and Gag-Pol polyproteins after assembly of the VLP. Its function is as follows. Reverse transcriptase/ribonuclease H (RT) is a multifunctional enzyme that catalyzes the conversion of the retro-elements RNA genome into dsDNA within the VLP. The enzyme displays a DNA polymerase activity that can copy either DNA or RNA templates, and a ribonuclease H (RNase H) activity that cleaves the RNA strand of RNA-DNA heteroduplexes during plus-strand synthesis and hydrolyzes RNA primers. The conversion leads to a linear dsDNA copy of the retrotransposon that includes long terminal repeats (LTRs) at both ends. Functionally, integrase (IN) targets the VLP to the nucleus, where a subparticle preintegration complex (PIC) containing at least integrase and the newly synthesized dsDNA copy of the retrotransposon must transit the nuclear membrane. Once in the nucleus, integrase performs the integration of the dsDNA into the host genome. The sequence is that of Transposon Ty1-OL Gag-Pol polyprotein (TY1B-OL) from Saccharomyces cerevisiae (strain ATCC 204508 / S288c) (Baker's yeast).